A 155-amino-acid polypeptide reads, in one-letter code: Ribosomal RNA large subunit methyltransferase H (155 aa).

S-adenosyl-L-methionine-binding positions include L73, G104, and 123–128 (LSPLTL).

This sequence belongs to the RNA methyltransferase RlmH family. As to quaternary structure, homodimer.

The protein localises to the cytoplasm. It catalyses the reaction pseudouridine(1915) in 23S rRNA + S-adenosyl-L-methionine = N(3)-methylpseudouridine(1915) in 23S rRNA + S-adenosyl-L-homocysteine + H(+). In terms of biological role, specifically methylates the pseudouridine at position 1915 (m3Psi1915) in 23S rRNA. The chain is Ribosomal RNA large subunit methyltransferase H from Pseudomonas putida (strain W619).